Consider the following 230-residue polypeptide: Probable phosphatase IndB (230 aa).

The Nucleophile role is filled by Asp8. The Mg(2+) site is built by Asp8, Asp10, and Asp169. The Proton donor role is filled by Asp10.

The protein belongs to the HAD-like hydrolase superfamily. Requires Mg(2+) as cofactor.

Part of an operon that could be involved in the biosynthesis of the blue pigment indigoidine, which is implicated in pathogenicity and protection from oxidative stress. This is Probable phosphatase IndB from Dickeya dadantii (strain 3937) (Erwinia chrysanthemi (strain 3937)).